Here is a 342-residue protein sequence, read N- to C-terminus: Ketol-acid reductoisomerase (NADP(+)) (342 aa).

The KARI N-terminal Rossmann domain maps to 2–181 (VKVYYNGDIK…GGARAGVLET (180 aa)). NADP(+)-binding positions include 25–28 (YGSQ), Arg48, Ser52, and 82–85 (DEQQ). His107 is a catalytic residue. Residue Gly133 coordinates NADP(+). Positions 182 to 327 (TFKEETETDL…RKLREMMPFV (146 aa)) constitute a KARI C-terminal knotted domain. The Mg(2+) site is built by Asp190, Glu194, Glu226, and Glu230. Ser251 contacts substrate.

This sequence belongs to the ketol-acid reductoisomerase family. Requires Mg(2+) as cofactor.

The enzyme catalyses (2R)-2,3-dihydroxy-3-methylbutanoate + NADP(+) = (2S)-2-acetolactate + NADPH + H(+). It catalyses the reaction (2R,3R)-2,3-dihydroxy-3-methylpentanoate + NADP(+) = (S)-2-ethyl-2-hydroxy-3-oxobutanoate + NADPH + H(+). Its pathway is amino-acid biosynthesis; L-isoleucine biosynthesis; L-isoleucine from 2-oxobutanoate: step 2/4. The protein operates within amino-acid biosynthesis; L-valine biosynthesis; L-valine from pyruvate: step 2/4. In terms of biological role, involved in the biosynthesis of branched-chain amino acids (BCAA). Catalyzes an alkyl-migration followed by a ketol-acid reduction of (S)-2-acetolactate (S2AL) to yield (R)-2,3-dihydroxy-isovalerate. In the isomerase reaction, S2AL is rearranged via a Mg-dependent methyl migration to produce 3-hydroxy-3-methyl-2-ketobutyrate (HMKB). In the reductase reaction, this 2-ketoacid undergoes a metal-dependent reduction by NADPH to yield (R)-2,3-dihydroxy-isovalerate. The chain is Ketol-acid reductoisomerase (NADP(+)) from Bacillus subtilis (strain 168).